The following is an 89-amino-acid chain: Putative membrane protein insertion efficiency factor (89 aa).

It belongs to the UPF0161 family.

Its subcellular location is the cell membrane. Could be involved in insertion of integral membrane proteins into the membrane. The protein is Putative membrane protein insertion efficiency factor of Exiguobacterium sp. (strain ATCC BAA-1283 / AT1b).